Consider the following 171-residue polypeptide: ATP synthase subunit b (171 aa).

The chain crosses the membrane as a helical span at residues 13–33 (GVEWGTTFVTLVTFVILIILL).

It belongs to the ATPase B chain family. F-type ATPases have 2 components, F(1) - the catalytic core - and F(0) - the membrane proton channel. F(1) has five subunits: alpha(3), beta(3), gamma(1), delta(1), epsilon(1). F(0) has three main subunits: a(1), b(2) and c(10-14). The alpha and beta chains form an alternating ring which encloses part of the gamma chain. F(1) is attached to F(0) by a central stalk formed by the gamma and epsilon chains, while a peripheral stalk is formed by the delta and b chains.

It is found in the cell membrane. Functionally, f(1)F(0) ATP synthase produces ATP from ADP in the presence of a proton or sodium gradient. F-type ATPases consist of two structural domains, F(1) containing the extramembraneous catalytic core and F(0) containing the membrane proton channel, linked together by a central stalk and a peripheral stalk. During catalysis, ATP synthesis in the catalytic domain of F(1) is coupled via a rotary mechanism of the central stalk subunits to proton translocation. Its function is as follows. Component of the F(0) channel, it forms part of the peripheral stalk, linking F(1) to F(0). This chain is ATP synthase subunit b, found in Staphylococcus epidermidis (strain ATCC 12228 / FDA PCI 1200).